The sequence spans 160 residues: Transcription elongation factor GreA (160 aa).

Residues 2-84 (KNTVNDKILL…SKAKIIKADL (83 aa)) adopt a coiled-coil conformation.

Belongs to the GreA/GreB family.

Functionally, necessary for efficient RNA polymerase transcription elongation past template-encoded arresting sites. The arresting sites in DNA have the property of trapping a certain fraction of elongating RNA polymerases that pass through, resulting in locked ternary complexes. Cleavage of the nascent transcript by cleavage factors such as GreA or GreB allows the resumption of elongation from the new 3'terminus. GreA releases sequences of 2 to 3 nucleotides. This chain is Transcription elongation factor GreA, found in Mesomycoplasma hyopneumoniae (strain 232) (Mycoplasma hyopneumoniae).